The chain runs to 201 residues: Putative manganese efflux pump MntP (201 aa).

The next 5 helical transmembrane spans lie at 6-26, 39-59, 105-125, 127-147, and 169-189; these read CLAV…ATGI, LAFH…TLGL, LTLI…GLSL, VLGI…LLFT, and LAGG…HGVF.

This sequence belongs to the MntP (TC 9.B.29) family.

The protein resides in the cell inner membrane. In terms of biological role, probably functions as a manganese efflux pump. The protein is Putative manganese efflux pump MntP of Nitratidesulfovibrio vulgaris (strain ATCC 29579 / DSM 644 / CCUG 34227 / NCIMB 8303 / VKM B-1760 / Hildenborough) (Desulfovibrio vulgaris).